An 840-amino-acid polypeptide reads, in one-letter code: Radial spoke head 10 homolog B (840 aa).

Basic and acidic residues-rich tracts occupy residues 1 to 16 (MVKE…DKSA) and 51 to 63 (QPKD…EVKS). Residues 1–74 (MVKEKKKADK…SLPNEDTTQY (74 aa)) form a disordered region. MORN repeat units lie at residues 86–108 (SYEG…QGGC), 109–131 (TYQG…ADGL), 132–154 (KYEG…PDGS), 155–177 (TYEG…STQP), 179–201 (SYIG…NQEG), 204–226 (WYEG…KSGN), 227–249 (IYEG…LTTN), 251–273 (EYTG…FLKR), 284–306 (EYVG…ASGA), and 307–329 (MYEG…KNGR). Residues 758–801 (KEKVKENRLHNEAMALQRKMENEELEARLNSLREEEAKRQDYEV) adopt a coiled-coil conformation. Residues 810–840 (VDAPSSSFTPSPPKEDTVVSSKSITSKKKKK) form a disordered region.

As to quaternary structure, interacts with RSPH6A. Does not appear to be part of the axonemal radial spoke complexes 1 or 2.

Its subcellular location is the cytoplasm. It is found in the cytoskeleton. The protein resides in the cilium axoneme. It localises to the cell projection. The protein localises to the cilium. Its subcellular location is the flagellum. Functionally, may function as part of the axonemal radial spoke complex 3 (RS3). Radial spoke complexes are important for ciliary motility. The sequence is that of Radial spoke head 10 homolog B (RSPH10B) from Bos taurus (Bovine).